A 290-amino-acid polypeptide reads, in one-letter code: Pyridoxal kinase PdxY (290 aa).

Substrate contacts are provided by residues Ser12 and 47 to 48 (TQ). ATP-binding positions include Asp114, Glu151, Lys184, and 211–214 (RPLL). Asp225 provides a ligand contact to substrate.

Belongs to the pyridoxine kinase family. PdxY subfamily. Homodimer. It depends on Mg(2+) as a cofactor.

The catalysed reaction is pyridoxal + ATP = pyridoxal 5'-phosphate + ADP + H(+). Its pathway is cofactor metabolism; pyridoxal 5'-phosphate salvage; pyridoxal 5'-phosphate from pyridoxal: step 1/1. Functionally, pyridoxal kinase involved in the salvage pathway of pyridoxal 5'-phosphate (PLP). Catalyzes the phosphorylation of pyridoxal to PLP. The protein is Pyridoxal kinase PdxY of Pseudomonas fluorescens (strain Pf0-1).